Reading from the N-terminus, the 190-residue chain is Vascular endothelial growth factor A (190 aa).

Residues 1–26 (MNFLLSWVHWSLALLLYLHHAKWSQA) form the signal peptide. Cystine bridges form between Cys-51–Cys-93, Cys-82–Cys-127, and Cys-86–Cys-129. N-linked (GlcNAc...) asparagine glycosylation is present at Asn-100.

The protein belongs to the PDGF/VEGF growth factor family. Homodimer; disulfide-linked. Also found as heterodimer with PGF. Interacts with NRP1. Interacts with isoform 2 of BSG. Interacts with CD82; this interaction inhibits VEGFA-mediated signaling pathway.

The protein localises to the secreted. Growth factor active in angiogenesis, vasculogenesis and endothelial cell growth. Induces endothelial cell proliferation, promotes cell migration, inhibits apoptosis and induces permeabilization of blood vessels. Binds to the FLT1/VEGFR1 and KDR/VEGFR2 receptors, heparan sulfate and heparin. Binding to NRP1 receptor initiates a signaling pathway needed for motor neuron axon guidance and cell body migration, including for the caudal migration of facial motor neurons from rhombomere 4 to rhombomere 6 during embryonic development. Also binds the DEAR/FBXW7-AS1 receptor. The protein is Vascular endothelial growth factor A (VEGFA) of Equus caballus (Horse).